The sequence spans 281 residues: NADPH-dependent 7-cyano-7-deazaguanine reductase (281 aa).

88 to 90 (IES) serves as a coordination point for substrate. 90–91 (SK) contacts NADPH. Cys189 acts as the Thioimide intermediate in catalysis. Residue Asp196 is the Proton donor of the active site. 228 to 229 (HE) is a binding site for substrate. NADPH is bound at residue 257–258 (RG).

It belongs to the GTP cyclohydrolase I family. QueF type 2 subfamily. Homodimer.

It localises to the cytoplasm. It catalyses the reaction 7-aminomethyl-7-carbaguanine + 2 NADP(+) = 7-cyano-7-deazaguanine + 2 NADPH + 3 H(+). Its pathway is tRNA modification; tRNA-queuosine biosynthesis. Functionally, catalyzes the NADPH-dependent reduction of 7-cyano-7-deazaguanine (preQ0) to 7-aminomethyl-7-deazaguanine (preQ1). This is NADPH-dependent 7-cyano-7-deazaguanine reductase from Yersinia pseudotuberculosis serotype O:1b (strain IP 31758).